Reading from the N-terminus, the 457-residue chain is Argininosuccinate lyase (457 aa).

This sequence belongs to the lyase 1 family. Argininosuccinate lyase subfamily.

It is found in the cytoplasm. The catalysed reaction is 2-(N(omega)-L-arginino)succinate = fumarate + L-arginine. It participates in amino-acid biosynthesis; L-arginine biosynthesis; L-arginine from L-ornithine and carbamoyl phosphate: step 3/3. The polypeptide is Argininosuccinate lyase (Exiguobacterium sibiricum (strain DSM 17290 / CCUG 55495 / CIP 109462 / JCM 13490 / 255-15)).